The chain runs to 386 residues: Chaperone protein DnaJ (386 aa).

The region spanning 6–71 (DYYEILGVDR…QKRARYDQFG (66 aa)) is the J domain. A CR-type zinc finger spans residues 144 to 226 (GTEKEVTVSR…CGGKGRVRKH (83 aa)). Residues Cys157, Cys160, Cys174, Cys177, Cys200, Cys203, Cys214, and Cys217 each contribute to the Zn(2+) site. CXXCXGXG motif repeat units follow at residues 157 to 164 (CPTCSGSG), 174 to 181 (CRQCNGTG), 200 to 207 (CDVCHGEG), and 214 to 221 (CETCGGKG).

The protein belongs to the DnaJ family. In terms of assembly, homodimer. Zn(2+) is required as a cofactor.

The protein localises to the cytoplasm. Functionally, participates actively in the response to hyperosmotic and heat shock by preventing the aggregation of stress-denatured proteins and by disaggregating proteins, also in an autonomous, DnaK-independent fashion. Unfolded proteins bind initially to DnaJ; upon interaction with the DnaJ-bound protein, DnaK hydrolyzes its bound ATP, resulting in the formation of a stable complex. GrpE releases ADP from DnaK; ATP binding to DnaK triggers the release of the substrate protein, thus completing the reaction cycle. Several rounds of ATP-dependent interactions between DnaJ, DnaK and GrpE are required for fully efficient folding. Also involved, together with DnaK and GrpE, in the DNA replication of plasmids through activation of initiation proteins. The polypeptide is Chaperone protein DnaJ (Acetivibrio thermocellus (strain ATCC 27405 / DSM 1237 / JCM 9322 / NBRC 103400 / NCIMB 10682 / NRRL B-4536 / VPI 7372) (Clostridium thermocellum)).